Here is a 432-residue protein sequence, read N- to C-terminus: Phosphomethylpyrimidine synthase (432 aa).

Substrate-binding positions include Asn66, Met95, Tyr124, His163, 185–187, 226–229, and Glu265; these read SRG and DGLR. His269 is a Zn(2+) binding site. Tyr292 contacts substrate. His333 serves as a coordination point for Zn(2+). The [4Fe-4S] cluster site is built by Cys409, Cys412, and Cys416.

The protein belongs to the ThiC family. The cofactor is [4Fe-4S] cluster.

The catalysed reaction is 5-amino-1-(5-phospho-beta-D-ribosyl)imidazole + S-adenosyl-L-methionine = 4-amino-2-methyl-5-(phosphooxymethyl)pyrimidine + CO + 5'-deoxyadenosine + formate + L-methionine + 3 H(+). It participates in cofactor biosynthesis; thiamine diphosphate biosynthesis. Functionally, catalyzes the synthesis of the hydroxymethylpyrimidine phosphate (HMP-P) moiety of thiamine from aminoimidazole ribotide (AIR) in a radical S-adenosyl-L-methionine (SAM)-dependent reaction. The polypeptide is Phosphomethylpyrimidine synthase (Desulfitobacterium hafniense (strain DSM 10664 / DCB-2)).